We begin with the raw amino-acid sequence, 397 residues long: Acetate kinase 1 (397 aa).

Asn-8 contacts Mg(2+). Lys-15 provides a ligand contact to ATP. Arg-89 lines the substrate pocket. The Proton donor/acceptor role is filled by Asp-146. Residues His-206–Gly-210, Asp-281–Arg-283, and Gly-329–Asn-333 contribute to the ATP site. Glu-380 contributes to the Mg(2+) binding site.

Belongs to the acetokinase family. As to quaternary structure, homodimer. Requires Mg(2+) as cofactor. Mn(2+) serves as cofactor.

The protein localises to the cytoplasm. It carries out the reaction acetate + ATP = acetyl phosphate + ADP. It participates in metabolic intermediate biosynthesis; acetyl-CoA biosynthesis; acetyl-CoA from acetate: step 1/2. Catalyzes the formation of acetyl phosphate from acetate and ATP. Can also catalyze the reverse reaction. The protein is Acetate kinase 1 of Listeria monocytogenes serotype 4b (strain F2365).